The chain runs to 251 residues: Imidazole glycerol phosphate synthase subunit HisF (251 aa).

Catalysis depends on residues aspartate 11 and aspartate 130.

It belongs to the HisA/HisF family. In terms of assembly, heterodimer of HisH and HisF.

The protein resides in the cytoplasm. The enzyme catalyses 5-[(5-phospho-1-deoxy-D-ribulos-1-ylimino)methylamino]-1-(5-phospho-beta-D-ribosyl)imidazole-4-carboxamide + L-glutamine = D-erythro-1-(imidazol-4-yl)glycerol 3-phosphate + 5-amino-1-(5-phospho-beta-D-ribosyl)imidazole-4-carboxamide + L-glutamate + H(+). It participates in amino-acid biosynthesis; L-histidine biosynthesis; L-histidine from 5-phospho-alpha-D-ribose 1-diphosphate: step 5/9. Functionally, IGPS catalyzes the conversion of PRFAR and glutamine to IGP, AICAR and glutamate. The HisF subunit catalyzes the cyclization activity that produces IGP and AICAR from PRFAR using the ammonia provided by the HisH subunit. The polypeptide is Imidazole glycerol phosphate synthase subunit HisF (Prosthecochloris aestuarii (strain DSM 271 / SK 413)).